The sequence spans 195 residues: 3-isopropylmalate dehydratase small subunit (195 aa).

This sequence belongs to the LeuD family. LeuD type 1 subfamily. In terms of assembly, heterodimer of LeuC and LeuD.

It catalyses the reaction (2R,3S)-3-isopropylmalate = (2S)-2-isopropylmalate. The protein operates within amino-acid biosynthesis; L-leucine biosynthesis; L-leucine from 3-methyl-2-oxobutanoate: step 2/4. Catalyzes the isomerization between 2-isopropylmalate and 3-isopropylmalate, via the formation of 2-isopropylmaleate. The polypeptide is 3-isopropylmalate dehydratase small subunit (Frankia casuarinae (strain DSM 45818 / CECT 9043 / HFP020203 / CcI3)).